Reading from the N-terminus, the 347-residue chain is MNPIIYTTLIMTVMSGTMLVMISSHWLLIWIGFEMNLLAMIPVLMKNFNPRATEAATKYFLTQATASMMLMMAIIINLLYSGQWTITKMFNPVAMTMMTMALAMKLGLSPFHFWVPEVTQGISLQAGLLLLTWQKLAPLSVLCQISQSINPNLMLTMAMLSILIGGWGGLNQTQLRKIMAYSSIAHMGWMTAVLPYNTTMTILNLLIYITMTLAMFMLLIHSSATTTLSLSHTWNKMPVITSLMMVTLLSMGGLPPLSGFMPKWMIIQEMTKNESIIMPTLMAMTALLNLYFYMRLAYSSSLTMFPSTNNMKMKWQFEHTKQMKLLPTMIVLSTLVLPMTPALSSLN.

10 helical membrane-spanning segments follow: residues 3–23, 25–45, 59–79, 89–109, 149–169, 178–198, 200–220, 237–257, 274–294, and 325–345; these read PIIYTTLIMTVMSGTMLVMIS, HWLLIWIGFEMNLLAMIPVLM, YFLTQATASMMLMMAIIINLL, MFNPVAMTMMTMALAMKLGLS, INPNLMLTMAMLSILIGGWGG, IMAYSSIAHMGWMTAVLPYNT, MTILNLLIYITMTLAMFMLLI, MPVITSLMMVTLLSMGGLPPL, ESIIMPTLMAMTALLNLYFYM, and LLPTMIVLSTLVLPMTPALSS.

Belongs to the complex I subunit 2 family. As to quaternary structure, core subunit of respiratory chain NADH dehydrogenase (Complex I) which is composed of 45 different subunits. Interacts with TMEM242.

It is found in the mitochondrion inner membrane. The enzyme catalyses a ubiquinone + NADH + 5 H(+)(in) = a ubiquinol + NAD(+) + 4 H(+)(out). Its function is as follows. Core subunit of the mitochondrial membrane respiratory chain NADH dehydrogenase (Complex I) which catalyzes electron transfer from NADH through the respiratory chain, using ubiquinone as an electron acceptor. Essential for the catalytic activity and assembly of complex I. This Sus scrofa (Pig) protein is NADH-ubiquinone oxidoreductase chain 2.